Reading from the N-terminus, the 356-residue chain is Heparan sulfate 2-O-sulfotransferase 1 (356 aa).

Residues 1–11 are Cytoplasmic-facing; it reads MGLLRIMLPPK. A helical; Signal-anchor for type II membrane protein membrane pass occupies residues 12-28; that stretch reads LQLLAVLVFGVAVLFLE. Residues 24–51 adopt a coiled-coil conformation; the sequence is VLFLENQIQKLEESRGKLERAIARHEVR. The Lumenal portion of the chain corresponds to 29-356; it reads NQIQKLEESR…FYEKIYPKSN (328 aa). Residues K83, T84, A85, S86, T87, and S88 each coordinate adenosine 3',5'-bisphosphate. 2 N-linked (GlcNAc...) asparagine glycosylation sites follow: N108 and N127. Active-site residues include H140 and H142. Adenosine 3',5'-bisphosphate contacts are provided by R164 and S172. Disulfide bonds link C201-C209 and C222-C228. The adenosine 3',5'-bisphosphate site is built by Y279, S285, T290, and K293.

It belongs to the sulfotransferase 3 family. In terms of assembly, homotrimer. As to expression, expressed in heart, limb, head and trunk. At stages 20 and 24, it is expressed in the most regions of the first and second pharyngeal arche. In both wing and leg buds, it is detected at the overlying ectoderm and mesenchyme throughout stages 21, 23 and 24.

The protein localises to the golgi apparatus membrane. In terms of biological role, catalyzes the transfer of a sulfo group from 3'-phospho-5'-adenylyl sulfate (PAPS) to the 2-OH position of iduronic acid (IdoA) or glucuronic acid (GlcA) within the heparan sulfate (HS) chain and participates in HS biosynthesis. The protein is Heparan sulfate 2-O-sulfotransferase 1 of Gallus gallus (Chicken).